A 130-amino-acid chain; its full sequence is UPF0102 protein AHA_3896 (130 aa).

Belongs to the UPF0102 family.

The polypeptide is UPF0102 protein AHA_3896 (Aeromonas hydrophila subsp. hydrophila (strain ATCC 7966 / DSM 30187 / BCRC 13018 / CCUG 14551 / JCM 1027 / KCTC 2358 / NCIMB 9240 / NCTC 8049)).